The sequence spans 156 residues: Small ribosomal subunit protein uS7 (156 aa).

It belongs to the universal ribosomal protein uS7 family. As to quaternary structure, part of the 30S ribosomal subunit. Contacts proteins S9 and S11.

In terms of biological role, one of the primary rRNA binding proteins, it binds directly to 16S rRNA where it nucleates assembly of the head domain of the 30S subunit. Is located at the subunit interface close to the decoding center, probably blocks exit of the E-site tRNA. The polypeptide is Small ribosomal subunit protein uS7 (Mycoplasmopsis pulmonis (strain UAB CTIP) (Mycoplasma pulmonis)).